Reading from the N-terminus, the 907-residue chain is Protein translocase subunit SecA (907 aa).

Residues Q87, 105-109 (GEGKT), and D512 contribute to the ATP site. Residues 869–897 (AESLSAHTPVVREGEKVGRNDPCPCGSGR) form a disordered region. Over residues 878-887 (VVREGEKVGR) the composition is skewed to basic and acidic residues. Positions 891, 893, 902, and 903 each coordinate Zn(2+).

The protein belongs to the SecA family. In terms of assembly, monomer and homodimer. Part of the essential Sec protein translocation apparatus which comprises SecA, SecYEG and auxiliary proteins SecDF-YajC and YidC. Requires Zn(2+) as cofactor.

It localises to the cell inner membrane. Its subcellular location is the cytoplasm. It carries out the reaction ATP + H2O + cellular proteinSide 1 = ADP + phosphate + cellular proteinSide 2.. Part of the Sec protein translocase complex. Interacts with the SecYEG preprotein conducting channel. Has a central role in coupling the hydrolysis of ATP to the transfer of proteins into and across the cell membrane, serving both as a receptor for the preprotein-SecB complex and as an ATP-driven molecular motor driving the stepwise translocation of polypeptide chains across the membrane. The protein is Protein translocase subunit SecA of Shewanella sediminis (strain HAW-EB3).